The following is a 230-amino-acid chain: Large ribosomal subunit protein uL1 (230 aa).

This sequence belongs to the universal ribosomal protein uL1 family. In terms of assembly, part of the 50S ribosomal subunit.

In terms of biological role, binds directly to 23S rRNA. The L1 stalk is quite mobile in the ribosome, and is involved in E site tRNA release. Functionally, protein L1 is also a translational repressor protein, it controls the translation of the L11 operon by binding to its mRNA. The sequence is that of Large ribosomal subunit protein uL1 from Paramagnetospirillum magneticum (strain ATCC 700264 / AMB-1) (Magnetospirillum magneticum).